Reading from the N-terminus, the 475-residue chain is Aspartyl/glutamyl-tRNA(Asn/Gln) amidotransferase subunit B (475 aa).

It belongs to the GatB/GatE family. GatB subfamily. In terms of assembly, heterotrimer of A, B and C subunits.

It carries out the reaction L-glutamyl-tRNA(Gln) + L-glutamine + ATP + H2O = L-glutaminyl-tRNA(Gln) + L-glutamate + ADP + phosphate + H(+). It catalyses the reaction L-aspartyl-tRNA(Asn) + L-glutamine + ATP + H2O = L-asparaginyl-tRNA(Asn) + L-glutamate + ADP + phosphate + 2 H(+). Functionally, allows the formation of correctly charged Asn-tRNA(Asn) or Gln-tRNA(Gln) through the transamidation of misacylated Asp-tRNA(Asn) or Glu-tRNA(Gln) in organisms which lack either or both of asparaginyl-tRNA or glutaminyl-tRNA synthetases. The reaction takes place in the presence of glutamine and ATP through an activated phospho-Asp-tRNA(Asn) or phospho-Glu-tRNA(Gln). The chain is Aspartyl/glutamyl-tRNA(Asn/Gln) amidotransferase subunit B from Bacillus cereus (strain G9842).